The sequence spans 275 residues: 2,3,4,5-tetrahydropyridine-2,6-dicarboxylate N-succinyltransferase (275 aa).

Residues R107 and D144 each contribute to the substrate site.

This sequence belongs to the transferase hexapeptide repeat family. In terms of assembly, homotrimer.

The protein resides in the cytoplasm. It carries out the reaction (S)-2,3,4,5-tetrahydrodipicolinate + succinyl-CoA + H2O = (S)-2-succinylamino-6-oxoheptanedioate + CoA. It participates in amino-acid biosynthesis; L-lysine biosynthesis via DAP pathway; LL-2,6-diaminopimelate from (S)-tetrahydrodipicolinate (succinylase route): step 1/3. The polypeptide is 2,3,4,5-tetrahydropyridine-2,6-dicarboxylate N-succinyltransferase (Polynucleobacter asymbioticus (strain DSM 18221 / CIP 109841 / QLW-P1DMWA-1) (Polynucleobacter necessarius subsp. asymbioticus)).